We begin with the raw amino-acid sequence, 139 residues long: D-ribose pyranase (139 aa).

H20 acts as the Proton donor in catalysis. Substrate-binding positions include D28, H106, and 128–130 (FAN).

The protein belongs to the RbsD / FucU family. RbsD subfamily. As to quaternary structure, homodecamer.

The protein resides in the cytoplasm. The catalysed reaction is beta-D-ribopyranose = beta-D-ribofuranose. It participates in carbohydrate metabolism; D-ribose degradation; D-ribose 5-phosphate from beta-D-ribopyranose: step 1/2. Its function is as follows. Catalyzes the interconversion of beta-pyran and beta-furan forms of D-ribose. The polypeptide is D-ribose pyranase (Yersinia enterocolitica serotype O:8 / biotype 1B (strain NCTC 13174 / 8081)).